A 419-amino-acid polypeptide reads, in one-letter code: Sphingomyelin phosphodiesterase 2 (419 aa).

A Mg(2+)-binding site is contributed by E49. Residue H272 is the Proton acceptor of the active site. Helical transmembrane passes span 326–346 (FSGYVIVWGLSLLVLLCVLAA) and 354–374 (AIILCIPSVGLVLVAGAVYLF).

The protein belongs to the neutral sphingomyelinase family. It depends on Mg(2+) as a cofactor. As to expression, although widely expressed in all tissues examined, except the spleen, high enzymatic activity occurs only in the brain.

It is found in the cell membrane. The enzyme catalyses a sphingomyelin + H2O = phosphocholine + an N-acylsphing-4-enine + H(+). It carries out the reaction an N-(acyl)-sphingosylphosphocholine + H2O = an N-acyl-sphingoid base + phosphocholine + H(+). The catalysed reaction is 1-O-octadecyl-sn-glycero-3-phosphocholine + H2O = 1-O-octadecyl-sn-glycerol + phosphocholine + H(+). It catalyses the reaction 1-hexadecanoyl-sn-glycero-3-phosphocholine + H2O = 1-hexadecanoyl-sn-glycerol + phosphocholine + H(+). The enzyme catalyses a sphingosylphosphocholine + H2O = a sphingoid base + phosphocholine + H(+). It carries out the reaction 1-O-hexadecyl-sn-glycero-3-phosphocholine + H2O = 1-O-hexadecyl-sn-glycerol + phosphocholine + H(+). Its pathway is lipid metabolism; sphingolipid metabolism. With respect to regulation, activated by arachidonic acid. Catalyzes, at least in vitro, the hydrolysis of sphingomyelin to form ceramide and phosphocholine. Also hydrolyzes 1-O-alkyl-2-lyso-sn-glycero-3-phosphocholine (lyso-platelet-activating factor) in vivo. Also acts on 1-acyl-2-lyso-sn-glycero-3-phosphocholine (lyso-PC) and sphingosylphosphocholine. The polypeptide is Sphingomyelin phosphodiesterase 2 (Mus musculus (Mouse)).